The primary structure comprises 336 residues: HTH-type transcriptional regulator AscG (336 aa).

Residues 2 to 56 (TTMLEVAKRAGVSKATVSRVLSGNGYVSQETKDRVFQAVEESGYRPNLLARNLSA) enclose the HTH lacI-type domain. The segment at residues 4 to 23 (MLEVAKRAGVSKATVSRVLS) is a DNA-binding region (H-T-H motif).

Functionally, repressor of the asc operon. The cryptic operon is activated by the insertion of IS186 into the ascG gene. This Escherichia coli (strain K12) protein is HTH-type transcriptional regulator AscG (ascG).